Consider the following 269-residue polypeptide: MNSLSNIDFSKLSLFESIIVASQAIREDFPSHSVLTELKNRIKEAESYISSENEPDRKLEKLLQLFYTQWNFGGASGVYKLSDTLWIDNVLKTRKGTAVSLGIIFLHIAQSLKLPLNPVVFPTQLILRADWINEKKWLINPFNGEILDQHTLEVWLKGNISPTAELYENDLYKSESITVIRKMLDTLKAALMEEKKMELALNVTNLLIKIDPNDPYEIRDRGLIYAQLECNHVALTDLIYFVEHCPEDPISEIIKIQIHSIEQKKTILH.

The protein belongs to the UPF0162 family.

This is UPF0162 protein BU173 from Buchnera aphidicola subsp. Acyrthosiphon pisum (strain APS) (Acyrthosiphon pisum symbiotic bacterium).